Reading from the N-terminus, the 483-residue chain is Betaine aldehyde dehydrogenase (483 aa).

Isoleucine 27 and aspartate 93 together coordinate K(+). Position 149-151 (149-151) interacts with NAD(+); that stretch reads GAW. The Charge relay system role is filled by lysine 161. 175–178 serves as a coordination point for NAD(+); the sequence is KPSE. Valine 179 is a binding site for K(+). 228–231 is an NAD(+) binding site; that stretch reads SVPT. Residue valine 243 coordinates K(+). Glutamate 249 (proton acceptor) is an active-site residue. NAD(+) is bound by residues glycine 251, cysteine 283, and glutamate 380. Cysteine 283 (nucleophile) is an active-site residue. Residue cysteine 283 is modified to Cysteine sulfenic acid (-SOH). Lysine 450 and glycine 453 together coordinate K(+). Residue glutamate 457 is the Charge relay system of the active site.

This sequence belongs to the aldehyde dehydrogenase family. Dimer of dimers. K(+) is required as a cofactor.

It carries out the reaction betaine aldehyde + NAD(+) + H2O = glycine betaine + NADH + 2 H(+). It functions in the pathway amine and polyamine biosynthesis; betaine biosynthesis via choline pathway; betaine from betaine aldehyde: step 1/1. In terms of biological role, involved in the biosynthesis of the osmoprotectant glycine betaine. Catalyzes the irreversible oxidation of betaine aldehyde to the corresponding acid. This is Betaine aldehyde dehydrogenase from Cereibacter sphaeroides (strain ATCC 17025 / ATH 2.4.3) (Rhodobacter sphaeroides).